The following is a 282-amino-acid chain: MPELPEVETVRKGLEKLLNDFYIERIEVLKERSIASNGGSKSFIVSVKNSYLGSWERRGKYLIGSLLTKEKFSKGFLVVHLRMTGQFKLLEKEVLACKHTRVRFFDERGRELRFIDIRNFGQMWHVPSSRSIPEIVSGIKRLGPEPFSDDFNSHYLEEYLKKKTRSIKSALLDQETVAGVGNIYADETLFDAGINPKKESRNLKSTELKRLCNSLVKILNISIGEGGTTFSDFRDLEGINGNYGGQAWVYRRSGKNCKKCGEKILREKICGRSTHWCPNCQK.

Pro-2 serves as the catalytic Schiff-base intermediate with DNA. The Proton donor role is filled by Glu-3. Lys-60 acts as the Proton donor; for beta-elimination activity in catalysis. Residues His-99, Arg-118, and Lys-163 each contribute to the DNA site. The segment at 248–282 (WVYRRSGKNCKKCGEKILREKICGRSTHWCPNCQK) adopts an FPG-type zinc-finger fold. Arg-272 acts as the Proton donor; for delta-elimination activity in catalysis.

Belongs to the FPG family. In terms of assembly, monomer. It depends on Zn(2+) as a cofactor.

It carries out the reaction Hydrolysis of DNA containing ring-opened 7-methylguanine residues, releasing 2,6-diamino-4-hydroxy-5-(N-methyl)formamidopyrimidine.. The enzyme catalyses 2'-deoxyribonucleotide-(2'-deoxyribose 5'-phosphate)-2'-deoxyribonucleotide-DNA = a 3'-end 2'-deoxyribonucleotide-(2,3-dehydro-2,3-deoxyribose 5'-phosphate)-DNA + a 5'-end 5'-phospho-2'-deoxyribonucleoside-DNA + H(+). Functionally, involved in base excision repair of DNA damaged by oxidation or by mutagenic agents. Acts as a DNA glycosylase that recognizes and removes damaged bases. Has a preference for oxidized purines, such as 7,8-dihydro-8-oxoguanine (8-oxoG). Has AP (apurinic/apyrimidinic) lyase activity and introduces nicks in the DNA strand. Cleaves the DNA backbone by beta-delta elimination to generate a single-strand break at the site of the removed base with both 3'- and 5'-phosphates. The protein is Formamidopyrimidine-DNA glycosylase of Prochlorococcus marinus (strain NATL2A).